Consider the following 42-residue polypeptide: Potassium channel toxin gamma-KTx 1.8 (42 aa).

Disulfide bonds link C5/C23, C11/C34, C20/C39, and C24/C41.

The protein belongs to the ergtoxin family. Gamma-KTx 1 subfamily. As to expression, expressed by the venom gland.

It is found in the secreted. Functionally, blocks in a reversible manner human and rat Kv11.1/KCNH2/ERG1 potassium channels. Also completely and irreversibly blocks rat Kv11.2/KCNH6/ERG2 and human Kv11.3/KCNH7/ERG3 channels. Also weakly inhibits Kir2.1/KCNJ2 and Kv1.2/KCNA2 potassium channels. The protein is Potassium channel toxin gamma-KTx 1.8 of Centruroides elegans (Bark scorpion).